A 444-amino-acid chain; its full sequence is Argininosuccinate synthase (444 aa).

Residues alanine 18 to serine 26 and alanine 44 contribute to the ATP site. Tyrosine 100 provides a ligand contact to L-citrulline. Positions 130 and 132 each coordinate ATP. L-aspartate contacts are provided by threonine 132, asparagine 136, and aspartate 137. L-citrulline is bound at residue asparagine 136. Aspartate 137 is an ATP binding site. L-citrulline contacts are provided by arginine 140 and serine 193. Aspartate 195 lines the ATP pocket. Residues threonine 202, glutamate 204, and glutamate 281 each contribute to the L-citrulline site.

It belongs to the argininosuccinate synthase family. Type 2 subfamily. As to quaternary structure, homotetramer.

It localises to the cytoplasm. The catalysed reaction is L-citrulline + L-aspartate + ATP = 2-(N(omega)-L-arginino)succinate + AMP + diphosphate + H(+). It participates in amino-acid biosynthesis; L-arginine biosynthesis; L-arginine from L-ornithine and carbamoyl phosphate: step 2/3. This chain is Argininosuccinate synthase, found in Haemophilus influenzae (strain PittGG).